A 202-amino-acid polypeptide reads, in one-letter code: Imidazoleglycerol-phosphate dehydratase (202 aa).

The protein belongs to the imidazoleglycerol-phosphate dehydratase family.

The protein localises to the cytoplasm. The enzyme catalyses D-erythro-1-(imidazol-4-yl)glycerol 3-phosphate = 3-(imidazol-4-yl)-2-oxopropyl phosphate + H2O. Its pathway is amino-acid biosynthesis; L-histidine biosynthesis; L-histidine from 5-phospho-alpha-D-ribose 1-diphosphate: step 6/9. This chain is Imidazoleglycerol-phosphate dehydratase, found in Sinorhizobium fredii (strain NBRC 101917 / NGR234).